A 603-amino-acid chain; its full sequence is UvrABC system protein C (603 aa).

In terms of domain architecture, GIY-YIG spans 15-92 (DQPGCYLMKD…IKKHDPRFNI (78 aa)). The UVR domain maps to 197–232 (KTVKNDLMKKMQEAAENMEFEKAGEFRDQINAIETT).

Belongs to the UvrC family. In terms of assembly, interacts with UvrB in an incision complex.

Its subcellular location is the cytoplasm. Functionally, the UvrABC repair system catalyzes the recognition and processing of DNA lesions. UvrC both incises the 5' and 3' sides of the lesion. The N-terminal half is responsible for the 3' incision and the C-terminal half is responsible for the 5' incision. This Listeria monocytogenes serotype 4b (strain CLIP80459) protein is UvrABC system protein C.